Consider the following 217-residue polypeptide: Nascent polypeptide-associated complex subunit alpha-like protein 2 (217 aa).

Residues 1 to 81 (MSPPPAVVTE…SEKKSRKAML (81 aa)) are disordered. A compositionally biased stretch (acidic residues) spans 37–60 (PIVEDVKDDEDDDDDDEEEEDDDA). Residues 70–135 (SRSEKKSRKA…AKIEDLSSQL (66 aa)) enclose the NAC-A/B domain. The UBA domain maps to 178 to 215 (VEARDIDLVMTQAGVSRSKAVKALKSHDGDIVSAIMEL).

This sequence belongs to the NAC-alpha family.

In terms of biological role, may promote appropriate targeting of ribosome-nascent polypeptide complexes. This chain is Nascent polypeptide-associated complex subunit alpha-like protein 2, found in Arabidopsis thaliana (Mouse-ear cress).